Here is a 166-residue protein sequence, read N- to C-terminus: Putative transmembrane protein ORF166 (166 aa).

A run of 3 helical transmembrane segments spans residues 35–55 (IILVFLITMPVRFFICIFAGL), 60–80 (PICVLINLLPPLAIAIPFVTA), and 124–144 (IFCLVGIIIADVLNPILAFIN).

It is found in the host membrane. The polypeptide is Putative transmembrane protein ORF166 (Acidianus convivator (ABV)).